A 256-amino-acid chain; its full sequence is Ribonuclease HII (256 aa).

Residues 72 to 256 (QYIAGMDEVG…SFNPVPKYLN (185 aa)) form the RNase H type-2 domain. Positions 78, 79, and 170 each coordinate a divalent metal cation.

The protein belongs to the RNase HII family. Requires Mn(2+) as cofactor. Mg(2+) is required as a cofactor.

The protein resides in the cytoplasm. It carries out the reaction Endonucleolytic cleavage to 5'-phosphomonoester.. Functionally, endonuclease that specifically degrades the RNA of RNA-DNA hybrids. The sequence is that of Ribonuclease HII from Limosilactobacillus reuteri (strain DSM 20016) (Lactobacillus reuteri).